The primary structure comprises 408 residues: uncharacterized protein (408 aa).

A divalent metal cation contacts are provided by Glu35, Asp61, and Asn96.

It belongs to the metallophosphoesterase superfamily. The cofactor is a divalent metal cation.

This is an uncharacterized protein from Bacillus subtilis (strain 168).